Here is a 147-residue protein sequence, read N- to C-terminus: Proteinase inhibitor type-2 (147 aa).

Positions 1-25 are cleaved as a signal peptide; the sequence is MAVHKEVSFVAYLLIVLGMFLYVDA. A run of 2 repeats spans residues 25–81 and 82–141. Intrachain disulfides connect Cys28–Cys116, Cys32–Cys112, Cys40–Cys122, Cys52–Cys89, Cys55–Cys73, Cys56–Cys85, Cys62–Cys98, and Cys115–Cys133.

This sequence belongs to the protease inhibitor I20 (potato type II proteinase inhibitor) family.

The sequence is that of Proteinase inhibitor type-2 from Solanum tuberosum (Potato).